The chain runs to 261 residues: Undecaprenyl-diphosphatase (261 aa).

Transmembrane regions (helical) follow at residues 1–21 (MTVL…FLPI), 40–60 (GLTF…AYFW), 79–99 (GRLF…GVLF), 106–126 (IFRS…GLWW), 140–160 (VNLF…IPGV), 185–205 (FLMS…ELPL), 210–230 (LAFI…IKFL), and 239–259 (YLLF…VFWL).

It belongs to the UppP family.

It is found in the cell membrane. The catalysed reaction is di-trans,octa-cis-undecaprenyl diphosphate + H2O = di-trans,octa-cis-undecaprenyl phosphate + phosphate + H(+). Its function is as follows. Catalyzes the dephosphorylation of undecaprenyl diphosphate (UPP). Confers resistance to bacitracin. This chain is Undecaprenyl-diphosphatase, found in Moorella thermoacetica (strain ATCC 39073 / JCM 9320).